Consider the following 219-residue polypeptide: 7-cyano-7-deazaguanine synthase (219 aa).

F10–L20 provides a ligand contact to ATP. Residues C188, C197, C200, and C203 each coordinate Zn(2+).

This sequence belongs to the QueC family. Homodimer. Zn(2+) is required as a cofactor.

The enzyme catalyses 7-carboxy-7-deazaguanine + NH4(+) + ATP = 7-cyano-7-deazaguanine + ADP + phosphate + H2O + H(+). It participates in purine metabolism; 7-cyano-7-deazaguanine biosynthesis. Its function is as follows. Catalyzes the ATP-dependent conversion of 7-carboxy-7-deazaguanine (CDG) to 7-cyano-7-deazaguanine (preQ(0)). The protein is 7-cyano-7-deazaguanine synthase of Clostridium botulinum (strain Loch Maree / Type A3).